Reading from the N-terminus, the 520-residue chain is Bile acid--coenzyme A ligase (520 aa).

It belongs to the ATP-dependent AMP-binding enzyme family. As to quaternary structure, homodimer. It depends on Mg(2+) as a cofactor.

The enzyme catalyses cholate + ATP + CoA = choloyl-CoA + AMP + diphosphate. It carries out the reaction deoxycholate + ATP + CoA = deoxycholoyl-CoA + AMP + diphosphate. It catalyses the reaction chenodeoxycholate + ATP + CoA = chenodeoxycholoyl-CoA + AMP + diphosphate. Its pathway is lipid metabolism; bile acid biosynthesis. With respect to regulation, inhibited by diphosphate. In terms of biological role, functions in the bile acid 7alpha-dehydroxylation pathway, which forms secondary bile acids via the 7alpha-dehydroxylation of primary bile acids, and is carried out by intestinal anaerobic bacteria. Catalyzes the initial step in this pathway, i.e. the ATP-dependent thioesterification of primary bile acids with coenzyme A. Is active with C-24 bile acids with free carboxyl groups such as cholate, deoxycholate and chenodeoxycholate. Produces AMP and pyrophosphate in addition to the bile acid-CoA thioester. This chain is Bile acid--coenzyme A ligase, found in Clostridium scindens (strain JCM 10418 / VPI 12708).